Here is a 162-residue protein sequence, read N- to C-terminus: MAKLHRLISAVLRLAAAGAAAAAAIIMVTSHETTSFFGIEMEAKYSYTPSFVFFVVAFAVAFAYSLLALLARPGSTASRLLLLSDVMVGMLLTGAVAATGAISQVGKSGNEHAGWLPICAQVQAYCSHVMGALIAGFVSLLLYFLIIMYSLHAVAEPLCSCH.

The Cytoplasmic portion of the chain corresponds to 1 to 7 (MAKLHRL). The chain crosses the membrane as a helical span at residues 8–28 (ISAVLRLAAAGAAAAAAIIMV). Residues 29 to 50 (TSHETTSFFGIEMEAKYSYTPS) lie on the Extracellular side of the membrane. The chain crosses the membrane as a helical span at residues 51 to 71 (FVFFVVAFAVAFAYSLLALLA). At 72 to 79 (RPGSTASR) the chain is on the cytoplasmic side. Residues 80-100 (LLLLSDVMVGMLLTGAVAATG) traverse the membrane as a helical segment. The Extracellular portion of the chain corresponds to 101–128 (AISQVGKSGNEHAGWLPICAQVQAYCSH). A helical membrane pass occupies residues 129-149 (VMGALIAGFVSLLLYFLIIMY). Topologically, residues 150–162 (SLHAVAEPLCSCH) are cytoplasmic.

The protein belongs to the Casparian strip membrane proteins (CASP) family. Homodimer and heterodimers.

The protein localises to the cell membrane. The protein is CASP-like protein 1C1 of Sorghum bicolor (Sorghum).